Reading from the N-terminus, the 119-residue chain is Large ribosomal subunit protein uL22 (119 aa).

The protein belongs to the universal ribosomal protein uL22 family. In terms of assembly, part of the 50S ribosomal subunit.

Its function is as follows. This protein binds specifically to 23S rRNA; its binding is stimulated by other ribosomal proteins, e.g. L4, L17, and L20. It is important during the early stages of 50S assembly. It makes multiple contacts with different domains of the 23S rRNA in the assembled 50S subunit and ribosome. Functionally, the globular domain of the protein is located near the polypeptide exit tunnel on the outside of the subunit, while an extended beta-hairpin is found that lines the wall of the exit tunnel in the center of the 70S ribosome. The chain is Large ribosomal subunit protein uL22 from Rickettsia felis (strain ATCC VR-1525 / URRWXCal2) (Rickettsia azadi).